Reading from the N-terminus, the 485-residue chain is Glutamyl-tRNA(Gln) amidotransferase subunit A (485 aa).

Active-site charge relay system residues include Lys-79 and Ser-154. The active-site Acyl-ester intermediate is Ser-178.

Belongs to the amidase family. GatA subfamily. Heterotrimer of A, B and C subunits.

The enzyme catalyses L-glutamyl-tRNA(Gln) + L-glutamine + ATP + H2O = L-glutaminyl-tRNA(Gln) + L-glutamate + ADP + phosphate + H(+). Its function is as follows. Allows the formation of correctly charged Gln-tRNA(Gln) through the transamidation of misacylated Glu-tRNA(Gln) in organisms which lack glutaminyl-tRNA synthetase. The reaction takes place in the presence of glutamine and ATP through an activated gamma-phospho-Glu-tRNA(Gln). In Clostridium botulinum (strain Alaska E43 / Type E3), this protein is Glutamyl-tRNA(Gln) amidotransferase subunit A.